Consider the following 178-residue polypeptide: Large ribosomal subunit protein uL6 (178 aa).

The protein belongs to the universal ribosomal protein uL6 family. In terms of assembly, part of the 50S ribosomal subunit.

Functionally, this protein binds to the 23S rRNA, and is important in its secondary structure. It is located near the subunit interface in the base of the L7/L12 stalk, and near the tRNA binding site of the peptidyltransferase center. This Helicobacter pylori (strain P12) protein is Large ribosomal subunit protein uL6.